The primary structure comprises 79 residues: Acyl carrier protein (79 aa).

Residues 2-77 enclose the Carrier domain; the sequence is SDIEARVKKI…LAIDYAKNNV (76 aa). The residue at position 37 (Ser37) is an O-(pantetheine 4'-phosphoryl)serine.

The protein belongs to the acyl carrier protein (ACP) family. Post-translationally, 4'-phosphopantetheine is transferred from CoA to a specific serine of apo-ACP by AcpS. This modification is essential for activity because fatty acids are bound in thioester linkage to the sulfhydryl of the prosthetic group.

Its subcellular location is the cytoplasm. Its pathway is lipid metabolism; fatty acid biosynthesis. Carrier of the growing fatty acid chain in fatty acid biosynthesis. The sequence is that of Acyl carrier protein from Leptothrix cholodnii (strain ATCC 51168 / LMG 8142 / SP-6) (Leptothrix discophora (strain SP-6)).